The sequence spans 372 residues: Nucleosome assembly protein 1;1 (372 aa).

The stretch at 26–80 (VNALKNKLQNLAGQRSDVLENLTPNVRKRVDALRDIQSQHDELEAKFREERAILE) forms a coiled coil. Ser-41 carries the post-translational modification Phosphoserine. The Nuclear export signal signature appears at 47–62 (LTPNVRKRVDALRDIQ). The short motif at 223–228 (KKKPKK) is the Nuclear localization signal element. The segment at 299-372 (AMEAEDFEID…DERPPECKQQ (74 aa)) is disordered. Acidic residues predominate over residues 300–337 (MEAEDFEIDDDEEDDIDEDEDEEDEEDEEDDDDEDEEE). The span at 360–372 (GKQDERPPECKQQ) shows a compositional bias: basic and acidic residues. A Cysteine methyl ester modification is found at Cys-369. The S-farnesyl cysteine moiety is linked to residue Cys-369. A propeptide spans 370 to 372 (KQQ) (removed in mature form).

The protein belongs to the nucleosome assembly protein (NAP) family. Can form homomeric and heteromeric protein complexes with NAP1;2, NAP1;3 and NAP1;4. Binds histone H2A. Interacts with PP438/PNM1. In terms of processing, prenylation of the protein is required for its function during the cell proliferation phase of leaf development. Ubiquitous.

It is found in the nucleus. Its subcellular location is the cytoplasm. Its function is as follows. May modulate chromatin structure by regulation of nucleosome assembly/disassembly. Contributes to the regulation of cell proliferation and cell expansion. May function in nucleotide excision repair (NER). Involved in somatic homologous recombination. The chain is Nucleosome assembly protein 1;1 (NAP1;1) from Arabidopsis thaliana (Mouse-ear cress).